Reading from the N-terminus, the 724-residue chain is 4-alpha-glucanotransferase (724 aa).

The protein belongs to the disproportionating enzyme family.

It localises to the cytoplasm. The catalysed reaction is Transfers a segment of a (1-&gt;4)-alpha-D-glucan to a new position in an acceptor, which may be glucose or a (1-&gt;4)-alpha-D-glucan.. This is 4-alpha-glucanotransferase (malQ) from Mycobacterium bovis (strain ATCC BAA-935 / AF2122/97).